Consider the following 228-residue polypeptide: Cytochrome c oxidase subunit 2 (228 aa).

The Mitochondrial intermembrane segment spans residues 1–26 (MPNWGQVMFQDAASSVMLQLVSFHDH). A helical membrane pass occupies residues 27–47 (ALLVLTLVLTVVGYALLALML). At 48-60 (NKQVNRYIMEAQT) the chain is on the mitochondrial matrix side. The chain crosses the membrane as a helical span at residues 61-81 (VETIWTILPALILLVLALPSL). At 82–228 (RILYITDEVS…FMSWVSNFKP (147 aa)) the chain is on the mitochondrial intermembrane side. His-161, Cys-196, Glu-198, Cys-200, His-204, and Met-207 together coordinate Cu cation. Glu-198 contributes to the Mg(2+) binding site.

It belongs to the cytochrome c oxidase subunit 2 family. In terms of assembly, component of the cytochrome c oxidase (complex IV, CIV), a multisubunit enzyme composed of a catalytic core of 3 subunits and several supernumerary subunits. The complex exists as a monomer or a dimer and forms supercomplexes (SCs) in the inner mitochondrial membrane with ubiquinol-cytochrome c oxidoreductase (cytochrome b-c1 complex, complex III, CIII). It depends on Cu cation as a cofactor.

It localises to the mitochondrion inner membrane. The catalysed reaction is 4 Fe(II)-[cytochrome c] + O2 + 8 H(+)(in) = 4 Fe(III)-[cytochrome c] + 2 H2O + 4 H(+)(out). Its function is as follows. Component of the cytochrome c oxidase, the last enzyme in the mitochondrial electron transport chain which drives oxidative phosphorylation. The respiratory chain contains 3 multisubunit complexes succinate dehydrogenase (complex II, CII), ubiquinol-cytochrome c oxidoreductase (cytochrome b-c1 complex, complex III, CIII) and cytochrome c oxidase (complex IV, CIV), that cooperate to transfer electrons derived from NADH and succinate to molecular oxygen, creating an electrochemical gradient over the inner membrane that drives transmembrane transport and the ATP synthase. Cytochrome c oxidase is the component of the respiratory chain that catalyzes the reduction of oxygen to water. Electrons originating from reduced cytochrome c in the intermembrane space (IMS) are transferred via the dinuclear copper A center (CU(A)) of subunit 2 and heme A of subunit 1 to the active site in subunit 1, a binuclear center (BNC) formed by heme A3 and copper B (CU(B)). The BNC reduces molecular oxygen to 2 water molecules using 4 electrons from cytochrome c in the IMS and 4 protons from the mitochondrial matrix. In Lumbricus terrestris (Common earthworm), this protein is Cytochrome c oxidase subunit 2 (COII).